The primary structure comprises 275 residues: Lectin (275 aa).

An N-terminal signal peptide occupies residues M1–S30. Positions 111 and 129 each coordinate D-glucose. Mn(2+) is bound by residues E149 and D151. Ca(2+) contacts are provided by D151, F153, N155, and D159. Residues D159 and H166 each contribute to the Mn(2+) site. A propeptide spanning residues N211–N217 is cleaved from the precursor. D-glucose is bound by residues G246 and A247. The propeptide occupies K270 to A275.

The protein belongs to the leguminous lectin family. In terms of assembly, heterotetramer of two alpha and two beta chains. In terms of processing, the mature form consists of two chains, alpha and beta, produced by cleavage of the immature protein. These remain cleaved, yet fold together to form one subunit.

In terms of biological role, D-mannose specific lectin. This chain is Lectin, found in Lens culinaris subsp. orientalis (Oriental wild lentil).